Reading from the N-terminus, the 602-residue chain is 4-hydroxy-3-methylbut-2-en-1-yl diphosphate synthase (flavodoxin) (602 aa).

Residues C508, C511, C543, and E550 each contribute to the [4Fe-4S] cluster site.

The protein belongs to the IspG family. [4Fe-4S] cluster is required as a cofactor.

It carries out the reaction (2E)-4-hydroxy-3-methylbut-2-enyl diphosphate + oxidized [flavodoxin] + H2O + 2 H(+) = 2-C-methyl-D-erythritol 2,4-cyclic diphosphate + reduced [flavodoxin]. The protein operates within isoprenoid biosynthesis; isopentenyl diphosphate biosynthesis via DXP pathway; isopentenyl diphosphate from 1-deoxy-D-xylulose 5-phosphate: step 5/6. Functionally, converts 2C-methyl-D-erythritol 2,4-cyclodiphosphate (ME-2,4cPP) into 1-hydroxy-2-methyl-2-(E)-butenyl 4-diphosphate. The protein is 4-hydroxy-3-methylbut-2-en-1-yl diphosphate synthase (flavodoxin) of Chlamydia trachomatis serovar D (strain ATCC VR-885 / DSM 19411 / UW-3/Cx).